A 250-amino-acid polypeptide reads, in one-letter code: Anti-Pycsar protein Apyc1 (250 aa).

A beta-lactamase-like region spans residues 19-220; that stretch reads YNNNALVKCN…AVQEMIMLMH (202 aa). Residues His-61, His-63, Asp-65, His-66, His-146, Asp-166, and His-220 each contribute to the Zn(2+) site.

This sequence belongs to the anti-Pycsar protein Apyc1 family. In terms of assembly, homodimer. Requires Zn(2+) as cofactor.

The enzyme catalyses 3',5'-cyclic CMP + H2O = CMP + H(+). It carries out the reaction 3',5'-cyclic UMP + H2O = UMP + H(+). Its function is as follows. Counteracts the endogenous Pycsar antiviral defense system. Phosphodiesterase that enables metal-dependent hydrolysis of host cyclic nucleotide Pycsar defense signals such as cCMP and cUMP. This chain is Anti-Pycsar protein Apyc1, found in Paenibacillus xerothermodurans.